The primary structure comprises 1173 residues: WASH complex subunit 4 (1173 aa).

At Ala-2 the chain carries N-acetylalanine. Ser-7 is subject to Phosphoserine. The interval 705–1173 (KDLALFFSLN…STVSADPVVK (469 aa)) is sufficient for interaction with WASHC5. A coiled-coil region spans residues 1135–1161 (RADKTAAEENQEKKEKEEETKTSNGDL). A compositionally biased stretch (basic and acidic residues) spans 1142–1155 (EENQEKKEKEEETK). Residues 1142 to 1173 (EENQEKKEKEEETKTSNGDLSDSTVSADPVVK) are disordered. Position 1154 is a phosphothreonine (Thr-1154). Over residues 1157–1167 (SNGDLSDSTVS) the composition is skewed to polar residues.

It belongs to the SWIP family. In terms of assembly, component of the WASH core complex also described as WASH regulatory complex (SHRC) composed of WASH (WASHC1, WASH2P or WASH3P), WASHC2 (WASHC2A or WASHC2C), WASHC3, WASHC4 and WASHC5. The WASH core complex associates via WASHC2 with the F-actin-capping protein dimer (formed by CAPZA1, CAPZA2 or CAPZA3 and CAPZB) in a transient or substoichiometric manner which was initially described as WASH complex.

It localises to the early endosome. Functionally, acts as a component of the WASH core complex that functions as a nucleation-promoting factor (NPF) at the surface of endosomes, where it recruits and activates the Arp2/3 complex to induce actin polymerization, playing a key role in the fission of tubules that serve as transport intermediates during endosome sorting. The protein is WASH complex subunit 4 of Homo sapiens (Human).